A 522-amino-acid polypeptide reads, in one-letter code: Peptide chain release factor 3 (522 aa).

Residues 10–277 form the tr-type G domain; sequence ASRKTFAIIS…TFVDFAPAPS (268 aa). GTP is bound by residues 19 to 26, 87 to 91, and 141 to 144; these read SHPDAGKT, DTPGH, and NKMD.

Belongs to the TRAFAC class translation factor GTPase superfamily. Classic translation factor GTPase family. PrfC subfamily.

The protein localises to the cytoplasm. Increases the formation of ribosomal termination complexes and stimulates activities of RF-1 and RF-2. It binds guanine nucleotides and has strong preference for UGA stop codons. It may interact directly with the ribosome. The stimulation of RF-1 and RF-2 is significantly reduced by GTP and GDP, but not by GMP. The polypeptide is Peptide chain release factor 3 (Listeria monocytogenes serovar 1/2a (strain ATCC BAA-679 / EGD-e)).